A 123-amino-acid chain; its full sequence is Ribosome-binding factor A (123 aa).

Belongs to the RbfA family. As to quaternary structure, monomer. Binds 30S ribosomal subunits, but not 50S ribosomal subunits or 70S ribosomes.

The protein resides in the cytoplasm. Its function is as follows. One of several proteins that assist in the late maturation steps of the functional core of the 30S ribosomal subunit. Associates with free 30S ribosomal subunits (but not with 30S subunits that are part of 70S ribosomes or polysomes). Required for efficient processing of 16S rRNA. May interact with the 5'-terminal helix region of 16S rRNA. The polypeptide is Ribosome-binding factor A (Neisseria gonorrhoeae (strain ATCC 700825 / FA 1090)).